The primary structure comprises 153 residues: ORM1-like protein 3 (153 aa).

The segment at 1–17 (MNVGTAHSEVNPNTRVM) is important for ceramide level-sensing. The Cytoplasmic portion of the chain corresponds to 1–21 (MNVGTAHSEVNPNTRVMNSRG). The next 2 membrane-spanning stretches (helical) occupy residues 22-42 (IWLSYVLAIGLLHVVLLSIPF) and 43-63 (VSVPVVWTLTNLIHNLGMYIF). The Cytoplasmic segment spans residues 64–94 (LHTVKGTPFETPDQGKARLLTHWEQMDYGVQ). The helical transmembrane segment at 95 to 117 (FTASRKFLTITPIVLYFLTSFYT) threads the bilayer. At 118 to 121 (KYDQ) the chain is on the extracellular side. A helical membrane pass occupies residues 122 to 142 (VHFILNTVSLMTVLIPKLPQL). Residue P137 is modified to Hydroxyproline. Residues 143-153 (HGVRIFGINKY) are Cytoplasmic-facing.

This sequence belongs to the ORM family. In terms of assembly, ceramide-sensitive subunit of the serine palmitoyltransferase (SPT) complex, which is also composed of SPTLC1, SPTLC2/3 and SPTSSA/B. When hydroxylated at Pro-137, ubiquitinated via 'Lys-48'-linkage, leading to proteasomal degradation. In endothelial cells, ORMDL3 proteasomal degradation is controlled by the sphingosine 1-phosphate receptor signaling pathway.

Its subcellular location is the endoplasmic reticulum membrane. In terms of biological role, plays an essential role in the homeostatic regulation of sphingolipid de novo biosynthesis by modulating the activity of the serine palmitoyltransferase (SPT) in response to ceramide levels. When complexed to SPT, the binding of ceramides to its N-terminus stabilizes a conformation that block SPT substrate entry, hence preventing SPT catalytic activity. Through this mechanism, maintains ceramide levels at sufficient concentrations for the production of complex sphingolipids, but which prevents the accumulation of ceramides to levels that trigger apoptosis. In Mus musculus (Mouse), this protein is ORM1-like protein 3 (Ormdl3).